A 373-amino-acid chain; its full sequence is Muscleblind-like protein 2 (373 aa).

4 C3H1-type zinc fingers span residues 13–41 (WLTL…HPPK), 47–73 (NGRV…HPPT), 176–204 (TDKL…HPAD), and 212–238 (DNTV…HPPA).

The protein belongs to the muscleblind family. In terms of assembly, interacts with ITGA3.

The protein resides in the nucleus. It localises to the cytoplasm. Mediates pre-mRNA alternative splicing regulation. Acts either as activator or repressor of splicing on specific pre-mRNA targets. Inhibits cardiac troponin-T (TNNT2) pre-mRNA exon inclusion but induces insulin receptor (IR) pre-mRNA exon inclusion in muscle. Antagonizes the alternative splicing activity pattern of CELF proteins. RNA-binding protein that binds to 5'ACACCC-3' core sequence, termed zipcode, within the 3'UTR of ITGA3. Binds to CUG triplet repeat expansion in myotonic dystrophy muscle cells by sequestering the target RNAs. Together with RNA binding proteins RBPMS and RBFOX2, activates vascular smooth muscle cells alternative splicing events. Regulates NCOR2 alternative splicing. Seems to regulate expression and localization of ITGA3 by transporting it from the nucleus to cytoplasm at adhesion plaques. May play a role in myotonic dystrophy pathophysiology (DM). This Mus musculus (Mouse) protein is Muscleblind-like protein 2 (Mbnl2).